We begin with the raw amino-acid sequence, 760 residues long: MOXD1 homolog 2 (760 aa).

The segment at 1 to 34 (MAHPRKAVATPATLQLGPPAQTAQSPAATLRHSR) is disordered. Residues 18-34 (PPAQTAQSPAATLRHSR) show a composition bias toward low complexity. A helical transmembrane segment spans residues 47 to 67 (CFISCHTFNLFLLLLLLASGV). Residues N78, N198, and N223 are each glycosylated (N-linked (GlcNAc...) asparagine). Residues 117–233 (DDFRILWQII…DTMRLLYMYH (117 aa)) enclose the DOMON domain. 3 disulfides stabilise this stretch: C339–C367, C467–C581, and C543–C565. The N-linked (GlcNAc...) asparagine glycan is linked to N668. The interval 678-701 (RCKPKRPLAPPTERTAPPPASDLS) is disordered. A helical membrane pass occupies residues 740-760 (FISCLLWLGASSWWLLLMLRT).

It belongs to the copper type II ascorbate-dependent monooxygenase family.

It is found in the membrane. In Drosophila melanogaster (Fruit fly), this protein is MOXD1 homolog 2 (olf413).